The chain runs to 537 residues: Membrane protein insertase YidC (537 aa).

A run of 5 helical transmembrane segments spans residues 6–26 (SLLA…WEID), 341–363 (LVSN…LYPL), 411–431 (LGGC…YWTF), 449–469 (LSAQ…MFLL), and 490–510 (PVIF…YWLV).

This sequence belongs to the OXA1/ALB3/YidC family. Type 1 subfamily. In terms of assembly, interacts with the Sec translocase complex via SecD. Specifically interacts with transmembrane segments of nascent integral membrane proteins during membrane integration.

Its subcellular location is the cell inner membrane. Its function is as follows. Required for the insertion and/or proper folding and/or complex formation of integral membrane proteins into the membrane. Involved in integration of membrane proteins that insert both dependently and independently of the Sec translocase complex, as well as at least some lipoproteins. Aids folding of multispanning membrane proteins. The chain is Membrane protein insertase YidC from Actinobacillus succinogenes (strain ATCC 55618 / DSM 22257 / CCUG 43843 / 130Z).